The chain runs to 412 residues: MKAEIMAIGTEILLGDIVNTNAQFLAKELANLGIGVYHQSVVGDNSERILEAFDNAFKNCDTIITTGGLGPTKDDLSKELAAKYFNMEMCLREELLCDLEDYFKKNNLEMTENNKKQCYFPKEAIILPNPNGTAPGAILEGENNKRIILLPGPPREMEPMFTNHVVPYLSKFTDSVLVSKILRVFGIGESKMEDLVCDLLDNENPTVAPYAKNIDVILRITAKGKDKEEAEKLIAPMEKEIRKRLGDNIYGEGEVTLEEVVGKLLVDKKMTVSTAESCTGGMVASTLINYPGISEVFMEGAVTYSNEAKMKRLGVKKETLEDFGAVSEECAREMAKGIAKNAGTRIGISTTGIAGPGGGTEEKPVGLVYAGLCIDGITKVKKFNFKADRQKVRTRTMMNVLDWLRRELEKID.

It belongs to the CinA family.

This is Putative competence-damage inducible protein from Clostridium perfringens (strain 13 / Type A).